The primary structure comprises 164 residues: Neurotrophin-3 (164 aa).

Positions 1–3 (IQS) are cleaved as a signal peptide. A propeptide spanning residues 4–118 (TSMDQGBLSE…GLNRTSRRKR (115 aa)) is cleaved from the precursor. The disordered stretch occupies residues 89 to 126 (LLSENTPLEPPPLYLTEEPMGLNRTSRRKRFAEGKSHR). Asparagine 111 carries an N-linked (GlcNAc...) asparagine glycan.

Belongs to the NGF-beta family.

The protein resides in the secreted. Its function is as follows. Seems to promote the survival of visceral and proprioceptive sensory neurons. The sequence is that of Neurotrophin-3 (NTF3) from Cylindrophis ruffus (Red-tailed pipe snake).